The primary structure comprises 1767 residues: Trans-Golgi network-localized SYP41-interacting protein 1 (1767 aa).

Positions 1–72 (MHEKDDLPQD…LTTDDDDNDD (72 aa)) are disordered. Over 1 to 1748 (MHEKDDLPQD…RVLMSRPQAR (1748 aa)) the chain is Cytoplasmic. The span at 16-32 (IENDDESNGQEEEELDP) shows a compositional bias: acidic residues. 5 coiled-coil regions span residues 276 to 436 (LSHL…MSTA), 493 to 516 (VRSLAEERKELTNVSQEYNRLKDL), 570 to 590 (KSNIRKELDDLSFSLKKMEET), 684 to 805 (VSNL…LQQS), and 845 to 1082 (IQEV…LSSK). The segment covering 1177–1190 (DNSVNTEPENSQGS) has biased composition (polar residues). Positions 1177–1198 (DNSVNTEPENSQGSAADEDEIS) are disordered. Coiled coils occupy residues 1251 to 1310 (NSSL…FQEN), 1362 to 1424 (IRDM…WHEK), 1522 to 1542 (LKKATEAESTTELELVKAKNE), and 1603 to 1630 (LAGSEKLVDKLSLRVKEFEEKLQTKAIQ). The chain crosses the membrane as a helical; Anchor for type IV membrane protein span at residues 1749 to 1766 (LGVMVYSLLLHLWLLASI). A topological domain (vesicular) is located at residue leucine 1767.

Interacts with SYP41. In terms of tissue distribution, expressed ubiquitously in roots, leaves and flowers, and, to a lower extent, in stems.

The protein localises to the golgi apparatus. Its subcellular location is the trans-Golgi network membrane. Tethering factor involved in vesicle fusion at the trans-Golgi network (TGN) thus being required for efficient protein trafficking to the vacuole. Implicated in resistance to salt and osmotic stresses. Modulates the cell morphology (e.g. epidermal cell file rotation (CFR) and cell expansion) in mature regions of roots and the base of hypocotyls as well as root skewing, a process leading to root movement within the soil in order to maximize anchorage and nutrient acquisition, probably by regulating microtubule stabilization independently of their orientation. This is Trans-Golgi network-localized SYP41-interacting protein 1 from Arabidopsis thaliana (Mouse-ear cress).